A 109-amino-acid polypeptide reads, in one-letter code: RYamide neuropeptides (109 aa).

Positions 1–22 (MNECVNKLLHLKFLFYFILGIQ) are cleaved as a signal peptide. Tyr-33 bears the Tyrosine amide mark. Residues 36–53 (STTYDESLKSRRIFIVPR) constitute a propeptide that is removed on maturation. At Tyr-63 the chain carries Tyrosine amide. The propeptide occupies 67 to 109 (SGKYLCLSREINKLIVRKRLRNNDKERTPTLSFITKHFLMRNT).

It localises to the secreted. Neuropeptides RYamide-1 and RYamide-2 are ligands for the G-protein coupled receptor RYa-R. May suppress feeding behavior. The chain is RYamide neuropeptides from Drosophila melanogaster (Fruit fly).